The primary structure comprises 757 residues: Neutral ceramidase 2 (757 aa).

The N-terminal stretch at 1 to 25 (MAVSLPLFQFILFLLLLLLSRTVYA) is a signal peptide. N-linked (GlcNAc...) asparagine glycosylation is present at Asn311. The Nucleophile role is filled by Ser330. 2 N-linked (GlcNAc...) asparagine glycosylation sites follow: Asn348 and Asn657.

It belongs to the neutral ceramidase family.

It is found in the secreted. It localises to the endoplasmic reticulum. Its subcellular location is the golgi apparatus. The enzyme catalyses an N-acylsphing-4-enine + H2O = sphing-4-enine + a fatty acid. Functionally, hydrolyzes the sphingolipid ceramide into sphingosine and free fatty acid. This chain is Neutral ceramidase 2, found in Arabidopsis thaliana (Mouse-ear cress).